Here is a 540-residue protein sequence, read N- to C-terminus: Maintenance of mitochondrial morphology protein 1 (540 aa).

At Met1–Gly25 the chain is on the lumenal side. A helical transmembrane segment spans residues Leu26–Phe46. The Cytoplasmic portion of the chain corresponds to Gly47 to Thr540. Disordered stretches follow at residues His52 to Pro135, Gly275 to Ala331, Gly416 to Met471, and Tyr509 to Thr540. Polar residues-rich tracts occupy residues Tyr69 to Arg81, Ser88 to Ser105, and Tyr112 to Ser121. Residues Lys122–Ser132 are compositionally biased toward basic residues. Residues Gln134–Pro409 enclose the SMP-LTD domain. The segment covering Thr321–Ala331 has biased composition (low complexity). 2 stretches are compositionally biased toward gly residues: residues Thr442–Met471 and Gly511–Arg521.

The protein belongs to the MMM1 family. Homodimer. Component of the ER-mitochondria encounter structure (ERMES) or MDM complex, composed of MMM1, MDM10, MDM12 and MDM34. An MMM1 homodimer associates with one molecule of MDM12 on each side in a pairwise head-to-tail manner, and the SMP-LTD domains of MMM1 and MDM12 generate a continuous hydrophobic tunnel for phospholipid trafficking.

The protein localises to the endoplasmic reticulum membrane. Functionally, component of the ERMES/MDM complex, which serves as a molecular tether to connect the endoplasmic reticulum (ER) and mitochondria. Components of this complex are involved in the control of mitochondrial shape and protein biogenesis, and function in nonvesicular lipid trafficking between the ER and mitochondria. The MDM12-MMM1 subcomplex functions in the major beta-barrel assembly pathway that is responsible for biogenesis of all outer membrane beta-barrel proteins, and acts in a late step after the SAM complex. The MDM10-MDM12-MMM1 subcomplex further acts in the TOM40-specific pathway after the action of the MDM12-MMM1 complex. Essential for establishing and maintaining the structure of mitochondria and maintenance of mtDNA nucleoids. The protein is Maintenance of mitochondrial morphology protein 1 of Blastomyces gilchristii (strain SLH14081) (Blastomyces dermatitidis).